A 199-amino-acid polypeptide reads, in one-letter code: Ribosomal RNA large subunit methyltransferase E (199 aa).

The S-adenosyl-L-methionine site is built by Gly53, Trp55, Asp73, Asp92, and Asp114. Lys154 functions as the Proton acceptor in the catalytic mechanism.

Belongs to the class I-like SAM-binding methyltransferase superfamily. RNA methyltransferase RlmE family.

Its subcellular location is the cytoplasm. It carries out the reaction uridine(2552) in 23S rRNA + S-adenosyl-L-methionine = 2'-O-methyluridine(2552) in 23S rRNA + S-adenosyl-L-homocysteine + H(+). Functionally, specifically methylates the uridine in position 2552 of 23S rRNA at the 2'-O position of the ribose in the fully assembled 50S ribosomal subunit. This is Ribosomal RNA large subunit methyltransferase E from Treponema denticola (strain ATCC 35405 / DSM 14222 / CIP 103919 / JCM 8153 / KCTC 15104).